The following is a 760-amino-acid chain: EFRYSQYKVQYDMPKEAYESKWTQCIKLIDQGGENLEERLNSQFKNWYRQKYLNLEEYRRLTVLNQIAWKALSNQIQYSCRKIMNSDISSFKHINELKSLEHRAAKAAEAEMKKRAQKPKKKKSRRGWLCCGGGDIETVEPQQEEPVQTVQEQQVNEYGDILPTLRASITNSAINYYDTVKDGVYLDHETSDALYTDEDLLFDLEKQKYMDMLDTSQEESVEENEEEHTVDDEHVEEHTADDEHVEEPTVADDEHVEEPTVADEHVEEPTVAEEHVEEPTVAEEHVEEPASDVQQTSEAAPTIEIPDTLYYDILGVGVNADMNEITERYFKLAENYYPYQRSGSTVFHNFRKVNEAYQVLGDIDKKRWYNKYGYDGIKQVNFMNPSIFYLLSSLEKFKDFTGTPQIVTLLRFFFEKRLSMNDLENKSEHLLKFMEQYQKEREAHVSEYLLNILQPCIAGDSKWNVPIITKLEGLKGSRFDIPILESLRWIFKHVAKTHLKKSSKSAKKLQQRTQANKQELANINNNLMSTLKEYLGSSEQMNSITYNFENINSNVDNGNQSKNISDLSYTDQKEILEKIVSYIVDISLYDIENTALNAAEQLLSDNSVDEKTLKKRAQSLKKLSSIMERYAGGKRNDKKAKKYDTQDVVGYIMHGISTINKEMKNQNENVPEHVQHNAEANVEHDAEENVEHDAEENAEENVEENVEEVEENVEENVEENVGEKKMRREEKKKRVQEPIKIDEIQVYDIIKNEKKKKTEF.

Positions 214–300 are disordered; sequence DTSQEESVEE…SDVQQTSEAA (87 aa). A compositionally biased stretch (acidic residues) spans 216-230; it reads SQEESVEENEEEHTV. Basic and acidic residues predominate over residues 231–242; that stretch reads DDEHVEEHTADD. Over residues 243-256 the composition is skewed to acidic residues; sequence EHVEEPTVADDEHV. Basic and acidic residues predominate over residues 262 to 288; sequence ADEHVEEPTVAEEHVEEPTVAEEHVEE. The J domain maps to 307–375; it reads DTLYYDILGV…KRWYNKYGYD (69 aa). Asparagine 425, asparagine 559, and asparagine 563 each carry an N-linked (GlcNAc...) asparagine glycan. Residues 683–692 show a composition bias toward basic and acidic residues; sequence EHDAEENVEH. The disordered stretch occupies residues 683–738; sequence EHDAEENVEHDAEENAEENVEENVEEVEENVEENVEENVGEKKMRREEKKKRVQEP. The span at 693 to 720 shows a compositional bias: acidic residues; sequence DAEENAEENVEENVEEVEENVEENVEEN.

Its subcellular location is the cell membrane. In terms of biological role, may disrupt the normal intermolecular interactions of the cytoplasmic domain of band 3 and thereby facilitate the invagination of the red cell membrane which is necessary for the formation of the parasitophorous vacuole. In Plasmodium falciparum (isolate NF7 / Ghana), this protein is Ring-infected erythrocyte surface antigen (RESA).